The following is a 77-amino-acid chain: Omega-conotoxin-like 6 (77 aa).

The signal sequence occupies residues 1–22 (MKLTCVVIIAVLLLTACQLITA). Positions 23–50 (DDSRGVQKHRSLRSTTKVSKSTSCMEAG) are excised as a propeptide. Disulfide bonds link Cys-46-Cys-61, Cys-53-Cys-64, and Cys-60-Cys-71.

It belongs to the conotoxin O1 superfamily. As to expression, expressed by the venom duct.

The protein localises to the secreted. Its function is as follows. Omega-conotoxins act at presynaptic membranes, they bind and block voltage-gated calcium channels (Cav). The protein is Omega-conotoxin-like 6 of Conus striatus (Striated cone).